A 481-amino-acid chain; its full sequence is MSYIKKLRARLDSGEISAVELTKEYLAKIKEQDKRINSVITLCEAEALKEAEDADAIISAGKQGLLTGIPILHKDLFCTKGIRTTAASKMLDNFVAPYDSTVTKNCKDQGMVTLGKLNMDEFAMGSTNEHSYYGAVSNPWDLERVPGGSSGGSAAAVAAGFAPISTGSDTGGSVRQPASFCGLTAMKPSYGSTSRFGMVAFASSFDQAGIFAHYAEDVAIMLDAIAGECEFDSTCVGVKENHFTQDLEKDISGKVIGVDESLIKDLPEQIQEAVLKTLDNFKKLGAEIKSVKVPDLKEALSTYYIITPAEAAANLARYDGIRYGYRNPEARDLDELYRKSRTDGFGAEVKRRIMIGNYVLASSQYDSYYNKAQQLRKVMTDQINQIFTQVDVIFMPASPSEAFKKGDKLDPVSAYLSDIYTIPANISGLPAIAFPIGFANNLPVGGQLMAKAFNDNILTQMVVQYQKHYGIEEFILEQARI.

Catalysis depends on charge relay system residues Lys74 and Ser149. The active-site Acyl-ester intermediate is Ser173.

It belongs to the amidase family. GatA subfamily. As to quaternary structure, heterotrimer of A, B and C subunits.

It carries out the reaction L-glutamyl-tRNA(Gln) + L-glutamine + ATP + H2O = L-glutaminyl-tRNA(Gln) + L-glutamate + ADP + phosphate + H(+). Allows the formation of correctly charged Gln-tRNA(Gln) through the transamidation of misacylated Glu-tRNA(Gln) in organisms which lack glutaminyl-tRNA synthetase. The reaction takes place in the presence of glutamine and ATP through an activated gamma-phospho-Glu-tRNA(Gln). The sequence is that of Glutamyl-tRNA(Gln) amidotransferase subunit A from Francisella tularensis subsp. novicida (strain U112).